We begin with the raw amino-acid sequence, 485 residues long: Ribulose bisphosphate carboxylase large chain 2 (485 aa).

Substrate-binding residues include asparagine 125 and threonine 175. Lysine 177 (proton acceptor) is an active-site residue. Residue lysine 179 participates in substrate binding. 3 residues coordinate Mg(2+): lysine 203, aspartate 205, and glutamate 206. Position 203 is an N6-carboxylysine (lysine 203). Histidine 295 acts as the Proton acceptor in catalysis. Residues arginine 296, histidine 328, and serine 380 each contribute to the substrate site.

It belongs to the RuBisCO large chain family. Type I subfamily. Heterohexadecamer of 8 large chains and 8 small chains. It depends on Mg(2+) as a cofactor.

It carries out the reaction 2 (2R)-3-phosphoglycerate + 2 H(+) = D-ribulose 1,5-bisphosphate + CO2 + H2O. The catalysed reaction is D-ribulose 1,5-bisphosphate + O2 = 2-phosphoglycolate + (2R)-3-phosphoglycerate + 2 H(+). Functionally, ruBisCO catalyzes two reactions: the carboxylation of D-ribulose 1,5-bisphosphate, the primary event in carbon dioxide fixation, as well as the oxidative fragmentation of the pentose substrate. Both reactions occur simultaneously and in competition at the same active site. The protein is Ribulose bisphosphate carboxylase large chain 2 of Methylibium petroleiphilum (strain ATCC BAA-1232 / LMG 22953 / PM1).